Consider the following 267-residue polypeptide: Phosphonoacetaldehyde hydrolase (267 aa).

The active-site Nucleophile is Asp10. The Mg(2+) site is built by Asp10 and Ala12. Lys51 serves as the catalytic Schiff-base intermediate with substrate. Asp184 provides a ligand contact to Mg(2+).

The protein belongs to the HAD-like hydrolase superfamily. PhnX family. As to quaternary structure, homodimer. It depends on Mg(2+) as a cofactor.

The enzyme catalyses phosphonoacetaldehyde + H2O = acetaldehyde + phosphate + H(+). Involved in phosphonate degradation. The protein is Phosphonoacetaldehyde hydrolase of Paraburkholderia xenovorans (strain LB400).